Consider the following 154-residue polypeptide: Endoribonuclease YbeY (154 aa).

Zn(2+) contacts are provided by His-113, His-117, and His-123.

Belongs to the endoribonuclease YbeY family. Zn(2+) is required as a cofactor.

Its subcellular location is the cytoplasm. Single strand-specific metallo-endoribonuclease involved in late-stage 70S ribosome quality control and in maturation of the 3' terminus of the 16S rRNA. In Anaplasma marginale (strain Florida), this protein is Endoribonuclease YbeY.